We begin with the raw amino-acid sequence, 43 residues long: Cytochrome b559 subunit beta (43 aa).

Residues 18 to 34 (WLSVHALGIPTIFFLGA) form a helical membrane-spanning segment. Position 22 (His-22) interacts with heme.

Belongs to the PsbE/PsbF family. As to quaternary structure, heterodimer of an alpha subunit and a beta subunit. PSII is composed of 1 copy each of membrane proteins PsbA, PsbB, PsbC, PsbD, PsbE, PsbF, PsbH, PsbI, PsbJ, PsbK, PsbL, PsbM, PsbT, PsbX, PsbY, PsbZ, Psb30/Ycf12, at least 3 peripheral proteins of the oxygen-evolving complex and a large number of cofactors. It forms dimeric complexes. Heme b is required as a cofactor.

The protein resides in the plastid. Its subcellular location is the chloroplast thylakoid membrane. This b-type cytochrome is tightly associated with the reaction center of photosystem II (PSII). PSII is a light-driven water:plastoquinone oxidoreductase that uses light energy to abstract electrons from H(2)O, generating O(2) and a proton gradient subsequently used for ATP formation. It consists of a core antenna complex that captures photons, and an electron transfer chain that converts photonic excitation into a charge separation. The polypeptide is Cytochrome b559 subunit beta (Stigeoclonium helveticum (Green alga)).